We begin with the raw amino-acid sequence, 443 residues long: Differentially expressed in FDCP 8 homolog A (443 aa).

Residues 1–49 (MEYDDKLVRFRQGHLNPFDKQGGAERHPADSEAQPPKDSSTISPHSIPE) form a disordered region. 2 consecutive Phorbol-ester/DAG-type zinc fingers follow at residues 134–185 (EHRF…TKPC) and 364–424 (IHTT…STSC).

This sequence belongs to the DEF8 family.

Functionally, positively regulates lysosome peripheral distribution and ruffled border formation in osteoclasts. Involved in bone resorption. This chain is Differentially expressed in FDCP 8 homolog A (def8-a), found in Xenopus laevis (African clawed frog).